The chain runs to 245 residues: Mitochondrial import inner membrane translocase subunit Tim21 (245 aa).

The transit peptide at 1–18 directs the protein to the mitochondrion; it reads MICAFLRVVRHAEKLHGS. Positions 64 to 97 are disordered; it reads FWTQGPDPRKAKEDSSKQVSINRNQREETGVSTS. The segment covering 70 to 79 has biased composition (basic and acidic residues); sequence DPRKAKEDSS. A helical membrane pass occupies residues 108-128; it reads TYLIVVLFGVSITGSLLYTIF.

It belongs to the TIM21 family. Component of the TIM23 complex. Component of the MITRAC (mitochondrial translation regulation assembly intermediate of cytochrome c oxidase complex) complex, the core components of this complex being COA3/MITRAC12 and COX14. Interacts with COA3 and MT-CO1/COX1.

It is found in the mitochondrion membrane. Its function is as follows. Participates in the translocation of transit peptide-containing proteins across the mitochondrial inner membrane. Also required for assembly of mitochondrial respiratory chain complex I and complex IV as component of the MITRAC (mitochondrial translation regulation assembly intermediate of cytochrome c oxidase complex) complex. Probably shuttles between the presequence translocase and respiratory-chain assembly intermediates in a process that promotes incorporation of early nuclear-encoded subunits into these complexes. The sequence is that of Mitochondrial import inner membrane translocase subunit Tim21 (Timm21) from Rattus norvegicus (Rat).